A 283-amino-acid chain; its full sequence is Bifunctional protein FolD 2 (283 aa).

NADP(+)-binding positions include 165 to 167 (GRG), Thr-192, and Val-233.

It belongs to the tetrahydrofolate dehydrogenase/cyclohydrolase family. As to quaternary structure, homodimer.

The catalysed reaction is (6R)-5,10-methylene-5,6,7,8-tetrahydrofolate + NADP(+) = (6R)-5,10-methenyltetrahydrofolate + NADPH. The enzyme catalyses (6R)-5,10-methenyltetrahydrofolate + H2O = (6R)-10-formyltetrahydrofolate + H(+). It functions in the pathway one-carbon metabolism; tetrahydrofolate interconversion. In terms of biological role, catalyzes the oxidation of 5,10-methylenetetrahydrofolate to 5,10-methenyltetrahydrofolate and then the hydrolysis of 5,10-methenyltetrahydrofolate to 10-formyltetrahydrofolate. The sequence is that of Bifunctional protein FolD 2 from Saccharopolyspora erythraea (strain ATCC 11635 / DSM 40517 / JCM 4748 / NBRC 13426 / NCIMB 8594 / NRRL 2338).